The primary structure comprises 708 residues: Elongation factor G (708 aa).

The tr-type G domain maps to 9–289 (MFTRNIGIMA…AVCAFLPSPE (281 aa)). Residues 18–25 (AHIDAGKT), 86–90 (DTPGH), and 140–143 (NKMD) each bind GTP.

The protein belongs to the TRAFAC class translation factor GTPase superfamily. Classic translation factor GTPase family. EF-G/EF-2 subfamily.

The protein localises to the cytoplasm. Functionally, catalyzes the GTP-dependent ribosomal translocation step during translation elongation. During this step, the ribosome changes from the pre-translocational (PRE) to the post-translocational (POST) state as the newly formed A-site-bound peptidyl-tRNA and P-site-bound deacylated tRNA move to the P and E sites, respectively. Catalyzes the coordinated movement of the two tRNA molecules, the mRNA and conformational changes in the ribosome. In Parabacteroides distasonis (strain ATCC 8503 / DSM 20701 / CIP 104284 / JCM 5825 / NCTC 11152), this protein is Elongation factor G.